A 160-amino-acid polypeptide reads, in one-letter code: Nucleotide-binding protein VSAL_I1728 (160 aa).

It belongs to the YajQ family.

Nucleotide-binding protein. In Aliivibrio salmonicida (strain LFI1238) (Vibrio salmonicida (strain LFI1238)), this protein is Nucleotide-binding protein VSAL_I1728.